Reading from the N-terminus, the 1303-residue chain is DNA-directed RNA polymerase subunit beta' (1303 aa).

The Zn(2+) site is built by Cys-60, Cys-62, Cys-75, and Cys-78. The Mg(2+) site is built by Asp-535, Asp-537, and Asp-539. Zn(2+) is bound by residues Cys-876, Cys-953, Cys-960, and Cys-963.

It belongs to the RNA polymerase beta' chain family. As to quaternary structure, the RNAP catalytic core consists of 2 alpha, 1 beta, 1 beta' and 1 omega subunit. When a sigma factor is associated with the core the holoenzyme is formed, which can initiate transcription. Requires Mg(2+) as cofactor. Zn(2+) serves as cofactor.

It catalyses the reaction RNA(n) + a ribonucleoside 5'-triphosphate = RNA(n+1) + diphosphate. Functionally, DNA-dependent RNA polymerase catalyzes the transcription of DNA into RNA using the four ribonucleoside triphosphates as substrates. The chain is DNA-directed RNA polymerase subunit beta' from Saccharopolyspora erythraea (strain ATCC 11635 / DSM 40517 / JCM 4748 / NBRC 13426 / NCIMB 8594 / NRRL 2338).